A 235-amino-acid polypeptide reads, in one-letter code: Orotidine 5'-phosphate decarboxylase (235 aa).

Substrate-binding positions include D12, K34, 61 to 70, T121, R182, Q191, G211, and R212; that span reads DLKFHDIPNT. The active-site Proton donor is the K63.

This sequence belongs to the OMP decarboxylase family. Type 1 subfamily. As to quaternary structure, homodimer.

The catalysed reaction is orotidine 5'-phosphate + H(+) = UMP + CO2. It functions in the pathway pyrimidine metabolism; UMP biosynthesis via de novo pathway; UMP from orotate: step 2/2. Catalyzes the decarboxylation of orotidine 5'-monophosphate (OMP) to uridine 5'-monophosphate (UMP). This chain is Orotidine 5'-phosphate decarboxylase, found in Marinomonas sp. (strain MWYL1).